The primary structure comprises 207 residues: ConoCAP (207 aa).

An N-terminal signal peptide occupies residues 1–21 (MVSLGHVLFVILLPVLLPVAA). The propeptide occupies 22 to 48 (DDPDDQMLSQISLPSSSRSEYDDNDVS). An intrachain disulfide couples cysteine 53 to cysteine 59. Glycine 60 is modified (glycine amide). The propeptide occupies 63 to 82 (HRDRSRRQERYGKRLIPVLA). Cysteine 87 and cysteine 92 are joined by a disulfide. Residue asparagine 94 is modified to Asparagine amide. The propeptide occupies 98 to 160 (SLSGAGPALS…RDPAASGDLS (63 aa)). The interval 131–155 (ARHEQQQQLLQQREQRGLESRDPAA) is disordered. Basic and acidic residues predominate over residues 143-152 (REQRGLESRD). Cysteine 165 and cysteine 171 form a disulfide bridge. Residue glycine 173 is modified to Glycine amide. The propeptide occupies 177–207 (TLYSPWLERMNEVADDRSARNALCTRLGWRE).

Expressed by the venom duct.

The protein localises to the secreted. Its function is as follows. In contrast to other members of the CCAP family which are cardio-accelerators, conoCAP-a decreases the heart frequency in Drosophila larvae (26%), rats and zebrafish embryos. It also reduces the blood pressure in rats. It decreases systolic calcium in ventricular cardiac myocytes, indicating that it may act via impairment of intracellular calcium trafficking. Synthetic conoCAP-b decreases the heart frequency of 23% in Drosophila larvae. Functionally, synthetic conoCAP-c decreases the heart frequency of 12% in Drosophila larvae. This Conus villepinii (Villepin's cone) protein is ConoCAP (conoCAP).